We begin with the raw amino-acid sequence, 134 residues long: Crustacean hyperglycemic hormones isoform B (134 aa).

An N-terminal signal peptide occupies residues 1 to 24 (MFACRTLCLVVVMVASLGTSGVGG). A Pyrrolidone carboxylic acid modification is found at Gln-61. D-phenylalanine; in form CHH-B-II is present on Phe-63. 3 cysteine pairs are disulfide-bonded: Cys-67–Cys-103, Cys-83–Cys-99, and Cys-86–Cys-112. A Valine amide modification is found at Val-132.

Belongs to the arthropod CHH/MIH/GIH/VIH hormone family. Stereoinversion of L-Phe (form CHH-B-I) to D-Phe (form CHH-B-II). In terms of tissue distribution, produced by the medulla terminalis X-organ in the eyestalks and transported to the sinus gland where they are stored and released. Present also in the ventral nervous system.

It is found in the secreted. In terms of biological role, hormone found in the sinus gland of isopods and decapods which controls the blood sugar level. Has a secretagogue action over the amylase released from the midgut gland. May act as a stress hormone and may be involved in the control of molting and reproduction. This is Crustacean hyperglycemic hormones isoform B from Homarus americanus (American lobster).